The sequence spans 1033 residues: Potassium-transporting ATPase alpha chain 1 (1033 aa).

At 1–96 (MGKENYELYS…NALRPPRGTP (96 aa)) the chain is on the cytoplasmic side. Residues tyrosine 6 and tyrosine 9 each carry the phosphotyrosine modification. Residues 14–39 (GTGPGGDMAAKMSKKKAGGGGGKKKE) are disordered. Positions 25–38 (MSKKKAGGGGGKKK) are enriched in basic residues. Serine 26 bears the Phosphoserine mark. A helical membrane pass occupies residues 97 to 117 (EYVKFARQLAGGLQCLMWVAA). The Lumenal portion of the chain corresponds to 118–140 (AICLIAFAIQASEGDLTTDDNLY). Residues 141-161 (LALALIAVVVVTGCFGYYQEF) form a helical membrane-spanning segment. The Cytoplasmic segment spans residues 162–297 (KSTNIIASFK…NEKTPIAIEI (136 aa)). The helical transmembrane segment at 298-317 (EHFVDIIAGLAILFGATFFV) threads the bilayer. At 318–329 (VAMCIGYTFLRA) the chain is on the lumenal side. A helical transmembrane segment spans residues 330 to 347 (MVFFMAIVVAYVPEGLLA). Residues valine 338, alanine 339, valine 341, and glutamate 343 each coordinate K(+). Over 348–781 (TVTVCLSLTA…EQGRLIFDNL (434 aa)) the chain is Cytoplasmic. Aspartate 385 serves as the catalytic 4-aspartylphosphate intermediate. Residues aspartate 385 and threonine 387 each coordinate Mg(2+). Serine 461 and serine 599 each carry phosphoserine. Mg(2+)-binding residues include aspartate 726 and aspartate 730. The helical transmembrane segment at 782–801 (KKSIAYTLTKNIPELTPYLI) threads the bilayer. Glutamate 795 serves as a coordination point for K(+). The Lumenal segment spans residues 802 to 811 (YITVSVPLPL). The chain crosses the membrane as a helical span at residues 812–832 (GCITILFIELCTDIFPSVSLA). Residue glutamate 820 coordinates K(+). At 833–852 (YEKAESDIMHLRPRNPRRDR) the chain is on the cytoplasmic side. Serine 838 is modified (phosphoserine). The chain crosses the membrane as a helical span at residues 853 to 875 (LVNEPLAAYSYFQIGAIQSFAGF). Topologically, residues 876–927 (ADYFTAMAQEGWFPLLCVGLRPQWEDHHLQDLQDSYGQEWTFGQRLYQQYTC) are lumenal. The helical transmembrane segment at 928–947 (YTVFFISIEMCQIADVLIRK) threads the bilayer. Residues 948–961 (TRRLSAFQQGFFRN) lie on the Cytoplasmic side of the membrane. Serine 952 carries the phosphoserine; by PKA modification. A helical membrane pass occupies residues 962 to 980 (RILVIAIVFQVCIGCFLCY). Residues 981–995 (CPGMPNIFNFMPIRF) lie on the Lumenal side of the membrane. The helical transmembrane segment at 996–1016 (QWWLVPMPFGLLIFVYDEIRK) threads the bilayer. Residues 1017–1033 (LGVRCCPGSWWDQELYY) are Cytoplasmic-facing.

It belongs to the cation transport ATPase (P-type) (TC 3.A.3) family. Type IIC subfamily. As to quaternary structure, the gastric H(+)/K(+) ATPase pump is composed of the catalytic alpha subunit ATP4A and the regulatory beta subunit ATP4B. Interacts (via the P-domain) with ATP4B (via N-terminus); this interaction stabilizes the lumenal-open E2 conformation state and prevents the reverse reaction of the transport cycle.

Its subcellular location is the apical cell membrane. The catalysed reaction is K(+)(out) + ATP + H2O + H(+)(in) = K(+)(in) + ADP + phosphate + 2 H(+)(out). The catalytic subunit of the gastric H(+)/K(+) ATPase pump which transports H(+) ions in exchange for K(+) ions across the apical membrane of parietal cells. Uses ATP as an energy source to pump H(+) ions to the gastric lumen while transporting K(+) ion from the lumen into the cell. Remarkably generates a million-fold proton gradient across the gastric parietal cell membrane, acidifying the gastric juice down to pH 1. Within a transport cycle, the transfer of a H(+) ion across the membrane is coupled to ATP hydrolysis and is associated with a transient phosphorylation that shifts the pump conformation from inward-facing (E1) to outward-facing state (E2). The release of the H(+) ion in the stomach lumen is followed by binding of K(+) ion converting the pump conformation back to the E1 state. The protein is Potassium-transporting ATPase alpha chain 1 (Atp4a) of Rattus norvegicus (Rat).